We begin with the raw amino-acid sequence, 646 residues long: Beta-galactosidase-1-like protein (646 aa).

Positions 1–23 (MPPDLPSLLLRLVVLLLLSQAEA) are cleaved as a signal peptide. N-linked (GlcNAc...) asparagine glycosylation is present at asparagine 93. Glutamate 182 (proton donor) is an active-site residue. Asparagine 239 carries N-linked (GlcNAc...) asparagine glycosylation. Glutamate 260 serves as the catalytic Nucleophile.

The protein belongs to the glycosyl hydrolase 35 family.

The protein resides in the secreted. In terms of biological role, probable glycosyl hydrolase. The chain is Beta-galactosidase-1-like protein (Glb1l) from Mus musculus (Mouse).